The sequence spans 218 residues: Transmembrane gamma-carboxyglutamic acid protein 1 (218 aa).

A propeptide spanning residues 1–20 (MGRVFLTGEKANSILKRYPR) is cleaved from the precursor. A Gla domain is found at 21-66 (ANGFFEEIRQGNIERECKEEFCTFEEAREAFENNEKTKEFWSTYTK). Over 21-83 (ANGFFEEIRQ…RGSDWFQFYL (63 aa)) the chain is Extracellular. Cys37 and Cys42 form a disulfide bridge. The helical transmembrane segment at 84–106 (TFPLIFGLFIILLVIFLIWRCFL) threads the bilayer. Residues 107-218 (RNKTRRQTVT…PMVPVVTTIK (112 aa)) lie on the Cytoplasmic side of the membrane. Positions 161–195 (TRLSNCDPPPTYEEATGQVNLQRSETEPHLDPPPE) are disordered.

Gla residues are produced after subsequent post-translational modifications of glutamate by a vitamin K-dependent gamma-carboxylase. Highly expressed in the spinal cord.

It is found in the membrane. The chain is Transmembrane gamma-carboxyglutamic acid protein 1 (PRRG1) from Homo sapiens (Human).